A 522-amino-acid polypeptide reads, in one-letter code: Target of rapamycin complex 2 subunit MAPKAP1 (522 aa).

Ala-2 carries the N-acetylalanine modification. Residues 2 to 184 (AFLDNPTIIL…KKIDVYLPLH (183 aa)) are interaction with MAP3K2. The interval 2–267 (AFLDNPTIIL…GFSTLALVEK (266 aa)) is interaction with NBN. The segment at 38–59 (LEKTHPPSVPGDSGSEVQGSSG) is disordered. Thr-86 carries the phosphothreonine; by PKB/AKT1 and RPS6KB1 modification. Residue Ser-128 is modified to Phosphoserine; by PKC. Positions 139–267 (QSILSVRLEQ…GFSTLALVEK (129 aa)) constitute a CRIM domain. Phosphoserine occurs at positions 186, 315, and 356. Residues 279–353 (LFVRINAAHG…QNAWEFCLVR (75 aa)) form an SIN1-type RBD region. Positions 382–487 (HYKSFKVSMI…IVLKVNYILE (106 aa)) constitute an SIN1-type PH domain. Residue Arg-393 participates in a 1,2-diacyl-sn-glycero-3-phospho-(1D-myo-inositol-3,4,5-trisphosphate) binding. A Phosphothreonine; by RPS6KB1 modification is found at Thr-398. Residues Lys-428 and Lys-464 each coordinate a 1,2-diacyl-sn-glycero-3-phospho-(1D-myo-inositol-3,4,5-trisphosphate). The interval 468 to 522 (FESDAATVSEIVLKVNYILESRASTARADYLAQKQRKLNRRTSFSFQKEKKSGQQ) is interaction with ATF2. Ser-510 carries the post-translational modification Phosphoserine.

The protein belongs to the SIN1 family. Component of the mechanistic target of rapamycin complex 2 (mTORC2), consisting in two heterotretramers composed of MTOR, MLST8, RICTOR and MAPKAP1/SIN1. The mTORC2 core complex associates with PRR5/PROTOR1 and/or PRR5L/PROTOR2. Contrary to mTORC1, mTORC2 does not bind to and is not sensitive to FKBP12-rapamycin. Interacts with MAP3K2. Interacts with ATF2. Interacts with MAPK8. Interacts with GTP-bound HRAS and KRAS; inhibiting their activity. Interacts with IFNAR2. Post-translationally, phosphorylation at Ser-128 by PKC promotes relocalization to the perinuclear region, where the mTORC2 complex specifically mediates phosphorylation of SGK1. Phosphorylated at Thr-86 by AKT1 or RPS6KB1 in the presence of growth factors; the effect of this phosphorylation is however unclear. According to two studies, phosphorylation at Thr-86 by AKT1 is part of a positive feedback loop that increases mTORC2 activation. According to another study, phosphorylation at Thr-86 and Thr-398 by RPS6KB1 promotes dissociation from the mTORC2 complex, leading to inhibit mTORC2 signaling. In terms of tissue distribution, uniquitously expressed, with highest levels in testis, kidney and liver. Present in renal tubule cells (at protein level).

It localises to the cell membrane. It is found in the endoplasmic reticulum membrane. Its subcellular location is the early endosome membrane. The protein resides in the late endosome membrane. The protein localises to the lysosome membrane. It localises to the golgi apparatus membrane. It is found in the mitochondrion outer membrane. Its subcellular location is the cytoplasm. The protein resides in the perinuclear region. The protein localises to the nucleus. With respect to regulation, phosphatidylinositol 3,4,5-trisphosphate (PI(3,4,5)P3) promotes MTOR activation by relieving MAPKAP1/SIN1-mediated inhibition of MTOR that takes place in absence of PI(3,4,5)P3. In terms of biological role, component of the mechanistic target of rapamycin complex 2 (mTORC2), which transduces signals from growth factors to pathways involved in proliferation, cytoskeletal organization, lipogenesis and anabolic output. In response to growth factors, mTORC2 phosphorylates and activates AGC protein kinase family members, including AKT (AKT1, AKT2 and AKT3), PKC (PRKCA, PRKCB and PRKCE) and SGK1. In contrast to mTORC1, mTORC2 is nutrient-insensitive. Within the mTORC2 complex, MAPKAP1/SIN1 acts as a substrate adapter which recognizes and binds AGC protein kinase family members for phosphorylation by MTOR. mTORC2 plays a critical role in AKT1 activation by mediating phosphorylation of different sites depending on the context, such as 'Thr-450', 'Ser-473', 'Ser-477' or 'Thr-479', facilitating the phosphorylation of the activation loop of AKT1 on 'Thr-308' by PDPK1/PDK1 which is a prerequisite for full activation. mTORC2 catalyzes the phosphorylation of SGK1 at 'Ser-422' and of PRKCA on 'Ser-657'. The mTORC2 complex also phosphorylates various proteins involved in insulin signaling, such as FBXW8 and IGF2BP1. mTORC2 acts upstream of Rho GTPases to regulate the actin cytoskeleton, probably by activating one or more Rho-type guanine nucleotide exchange factors. mTORC2 promotes the serum-induced formation of stress-fibers or F-actin. MAPKAP1 inhibits MAP3K2 by preventing its dimerization and autophosphorylation. Inhibits HRAS and KRAS independently of mTORC2 complex. Enhances osmotic stress-induced phosphorylation of ATF2 and ATF2-mediated transcription. Involved in ciliogenesis, regulates cilia length through its interaction with CCDC28B independently of mTORC2 complex. This Mus musculus (Mouse) protein is Target of rapamycin complex 2 subunit MAPKAP1.